The chain runs to 270 residues: Inositol monophosphatase (270 aa).

Mg(2+)-binding residues include Glu71, Asp91, Leu93, and Asp94. Glu71 is a substrate binding site. Substrate is bound by residues 93 to 96, 194 to 196, Glu213, and Asp221; these read LDGT and GSC. Asp221 contacts Mg(2+).

This sequence belongs to the inositol monophosphatase superfamily. Mg(2+) is required as a cofactor.

It catalyses the reaction a myo-inositol phosphate + H2O = myo-inositol + phosphate. It functions in the pathway polyol metabolism; myo-inositol biosynthesis; myo-inositol from D-glucose 6-phosphate: step 2/2. Its activity is regulated as follows. Inhibited by Li(+). In terms of biological role, responsible for the provision of inositol required for synthesis of phosphatidylinositol and polyphosphoinositides. The polypeptide is Inositol monophosphatase (IMP1) (Mesembryanthemum crystallinum (Common ice plant)).